The chain runs to 1165 residues: Protein hsr-9 (1165 aa).

Disordered stretches follow at residues 1–26, 70–578, 608–713, and 874–913; these read MASSSNTMEFEEDDSTVTQTSLPTTT, AEDE…TEME, KYSM…IPLK, and TRARKPTTVSNQAKPKGRKKKGVDLVSSRGGSASPAEEEE. Residues 16 to 26 show a composition bias toward low complexity; sequence TVTQTSLPTTT. Composition is skewed to basic and acidic residues over residues 98 to 114, 123 to 140, and 149 to 162; these read KDAKSGESMNDSEKSES, TFEKKIISMDTSDDKLDI, and DTEKPEENEEKVVG. Composition is skewed to acidic residues over residues 163 to 179, 211 to 230, and 280 to 289; these read DEDEEDIDDVQEDDEDE, EKEEPENEDDTEEPENEVEV, and GESEANEENQ. Residues 306-317 are compositionally biased toward polar residues; it reads ATVSSTPSSNTP. Over residues 397–408 the composition is skewed to basic and acidic residues; sequence NTEHPTEEETPK. Positions 415–431 are enriched in low complexity; the sequence is SAASSSATSSAVPTPRS. The span at 446–461 shows a compositional bias: basic and acidic residues; that stretch reads LQEKETEDPTKTHDTN. The span at 533-543 shows a compositional bias: acidic residues; it reads DPIEEADETIE. Residues 554–563 are compositionally biased toward low complexity; sequence AAKSAPSSSK. 2 stretches are compositionally biased toward basic and acidic residues: residues 662 to 671 and 694 to 708; these read KKEEEHHEND and SEASDIKTPPAKKEP. The BRCT domain maps to 923–1028; the sequence is IGKNIFTGKV…KCVDYTDYVL (106 aa).

Expressed in germ cells.

The protein localises to the nucleus. Its function is as follows. May have a role in DNA double-strand break repair following gamma-irradiation. This chain is Protein hsr-9, found in Caenorhabditis elegans.